A 582-amino-acid chain; its full sequence is Probable inorganic phosphate transporter 1-9 (582 aa).

The Cytoplasmic segment spans residues 1–23 (MAPRIRVLAALDQARTQYYHFKA). Residues 24-44 (IVIAGMGLFTDSYDLFCISPV) traverse the membrane as a helical segment. At 45-75 (MKIFGRVYYAPSGSVDGSGSGPGVTPPAVVS) the chain is on the extracellular side. The chain crosses the membrane as a helical span at residues 76 to 96 (ATVGVALLGAVAGNVVFGALG). Residues 97 to 103 (DRVGRRR) lie on the Cytoplasmic side of the membrane. A helical membrane pass occupies residues 104-124 (VYGACLLLMVCSSVGSGLSVC). Residues 125–130 (RTRRCA) are Extracellular-facing. The chain crosses the membrane as a helical span at residues 131–151 (LASLCFFRFLLGVGVGGDYPL). At 152–165 (SATIMSEFANRRTR) the chain is on the cytoplasmic side. A helical transmembrane segment spans residues 166-186 (GAFIAAVFSMQGFGILVSSAV). Over 187–210 (TMAVAAAFDHYTGYPAPLDTPECA) the chain is Extracellular. The helical transmembrane segment at 211–231 (DLAWRIILMAGAVPAALTYYW) threads the bilayer. Topologically, residues 232–307 (RMSMPETARY…RRFVRQHGRD (76 aa)) are cytoplasmic. Residues 308–328 (LFACAAAWFLLDIPYYSSTLF) traverse the membrane as a helical segment. Residues 329-354 (QSQIYRPWFPPAAKVNAFQEAFNVAK) lie on the Extracellular side of the membrane. Residues 355–375 (FQAVIAVASTIPGYFAAMLLI) traverse the membrane as a helical segment. At 376 to 385 (ERAGRRRLQM) the chain is on the cytoplasmic side. A helical membrane pass occupies residues 386 to 406 (AGFLLMAVFLFALAGPYDGYW). The Extracellular portion of the chain corresponds to 407 to 415 (RDHAKTAGY). Residues 416–436 (IVLYSLTFFSANLGPNTTTFI) form a helical membrane-spanning segment. Residues 437–451 (LPAELFPARFRSTCH) lie on the Cytoplasmic side of the membrane. The helical transmembrane segment at 452–472 (GLSGAAGKLGALVGSIGFLWA) threads the bilayer. The Extracellular segment spans residues 473–485 (SQQKDGAAAGHLP). Residues 486 to 506 (GIGMMYALFVLGGICLLGLAL) traverse the membrane as a helical segment. Residues 507–582 (TYAFTPETMT…SPILPHRMSL (76 aa)) are Cytoplasmic-facing. Residues 519–541 (LEENESSVQAQSQVGDGGSDAGN) form a disordered region.

It belongs to the major facilitator superfamily. Phosphate:H(+) symporter (TC 2.A.1.9) family. In terms of tissue distribution, expressed at low levels in roots.

It localises to the membrane. In terms of biological role, high-affinity transporter for external inorganic phosphate. In Oryza sativa subsp. japonica (Rice), this protein is Probable inorganic phosphate transporter 1-9 (PHT1-9).